The chain runs to 500 residues: Endonuclease domain-containing 1 protein (500 aa).

A signal peptide spans 1-21; that stretch reads MGTARWLALGSLFALAGLLEG. The segment at 293–323 is disordered; sequence ERMVQSQKSSSPLSSTRSKRSTLLPPEASEG. A compositionally biased stretch (low complexity) spans 297 to 317; the sequence is QSQKSSSPLSSTRSKRSTLLP. Position 407 is an N6-acetyllysine (Lys407).

The protein belongs to the DNA/RNA non-specific endonuclease family. As to quaternary structure, interacts with RNF26; this interaction is important to modulate innate immune signaling through the cGAS-STING pathway.

Its subcellular location is the secreted. Functionally, may act as a DNase and a RNase. Plays a role in the modulation of innate immune signaling through the cGAS-STING pathway by interacting with RNF26. The chain is Endonuclease domain-containing 1 protein (ENDOD1) from Homo sapiens (Human).